Here is an 844-residue protein sequence, read N- to C-terminus: Elongation factor 2 (844 aa).

Positions 17–255 (TNVRNMSVIA…LWGDNYFNPK (239 aa)) constitute a tr-type G domain. Residue 26 to 33 (AHVDHGKS) participates in GTP binding. Phosphothreonine is present on residues Thr57 and Thr59. GTP is bound by residues 160–163 (NKVD) and 215–217 (SGL). A Diphthamide modification is found at His700.

The protein belongs to the TRAFAC class translation factor GTPase superfamily. Classic translation factor GTPase family. EF-G/EF-2 subfamily.

Its subcellular location is the cytoplasm. The catalysed reaction is GTP + H2O = GDP + phosphate + H(+). Catalyzes the GTP-dependent ribosomal translocation step during translation elongation. During this step, the ribosome changes from the pre-translocational (PRE) to the post-translocational (POST) state as the newly formed A-site-bound peptidyl-tRNA and P-site-bound deacylated tRNA move to the P and E sites, respectively. Catalyzes the coordinated movement of the two tRNA molecules, the mRNA and conformational changes in the ribosome. The polypeptide is Elongation factor 2 (cot-3) (Neurospora crassa (strain ATCC 24698 / 74-OR23-1A / CBS 708.71 / DSM 1257 / FGSC 987)).